A 322-amino-acid polypeptide reads, in one-letter code: Adenine deaminase (322 aa).

His-11, His-13, and His-189 together coordinate Zn(2+). Glu-192 serves as the catalytic Proton donor. A Zn(2+)-binding site is contributed by Asp-270. Asp-271 lines the substrate pocket.

This sequence belongs to the metallo-dependent hydrolases superfamily. Adenosine and AMP deaminases family. Adenine deaminase type 2 subfamily. Zn(2+) is required as a cofactor.

The enzyme catalyses adenine + H2O + H(+) = hypoxanthine + NH4(+). Its function is as follows. Catalyzes the hydrolytic deamination of adenine to hypoxanthine. Plays an important role in the purine salvage pathway and in nitrogen catabolism. In Rhizobium johnstonii (strain DSM 114642 / LMG 32736 / 3841) (Rhizobium leguminosarum bv. viciae), this protein is Adenine deaminase.